A 372-amino-acid polypeptide reads, in one-letter code: GDP-mannose 4,6 dehydratase (372 aa).

Residues 1 to 22 (MAHAPASCPSSRNSGDGDKGKP) are disordered. A2 is modified (N-acetylalanine). NADP(+)-binding positions include 30-35 (GITGQD), 55-58 (RRSS), 86-87 (DL), 108-112 (LGAQS), and Y123. T155 is a catalytic residue. Residues E157 and Y179 each act as nucleophile in the active site. Residues K183, H209, and R214 each coordinate NADP(+). Y323 carries the phosphotyrosine modification.

The protein belongs to the NAD(P)-dependent epimerase/dehydratase family. GDP-mannose 4,6-dehydratase subfamily. The cofactor is NADP(+).

The catalysed reaction is GDP-alpha-D-mannose = GDP-4-dehydro-alpha-D-rhamnose + H2O. It functions in the pathway nucleotide-sugar biosynthesis; GDP-L-fucose biosynthesis via de novo pathway; GDP-L-fucose from GDP-alpha-D-mannose: step 1/2. With respect to regulation, inhibited by GDP-fucose. In terms of biological role, catalyzes the conversion of GDP-D-mannose to GDP-4-dehydro-6-deoxy-D-mannose. The polypeptide is GDP-mannose 4,6 dehydratase (GMDS) (Cricetulus griseus (Chinese hamster)).